The sequence spans 488 residues: Probable cytosol aminopeptidase (488 aa).

Mn(2+) contacts are provided by K253 and D258. K265 is a catalytic residue. 3 residues coordinate Mn(2+): D276, D335, and E337. R339 is a catalytic residue.

Belongs to the peptidase M17 family. Requires Mn(2+) as cofactor.

The protein resides in the cytoplasm. It carries out the reaction Release of an N-terminal amino acid, Xaa-|-Yaa-, in which Xaa is preferably Leu, but may be other amino acids including Pro although not Arg or Lys, and Yaa may be Pro. Amino acid amides and methyl esters are also readily hydrolyzed, but rates on arylamides are exceedingly low.. It catalyses the reaction Release of an N-terminal amino acid, preferentially leucine, but not glutamic or aspartic acids.. In terms of biological role, presumably involved in the processing and regular turnover of intracellular proteins. Catalyzes the removal of unsubstituted N-terminal amino acids from various peptides. The sequence is that of Probable cytosol aminopeptidase from Dinoroseobacter shibae (strain DSM 16493 / NCIMB 14021 / DFL 12).